A 950-amino-acid polypeptide reads, in one-letter code: MAFANFRRILRLPNFEKKRLREYEHVRRDVDPNQVWEIIGELGDGAFGKVYKAKNRETGILAAAKVIETKNEEELEDYMVEIEILATCNHHFIVKLLGAFYWEGKLWIMIEFCPGGAVDAVMLELDRGLKEPEIKTICRQMLEALAYLHSMKIIHRDLKAGNVLLTLDGDIKLADFGVSAKNVKTLQRRDSFIGTPYWMAPEVVMCETMKDAPYDYKADIWSLGITLIEMAQIEPPHHELNPMRVLLKIAKSEPPTLSSLSKWSPEFHSFLKTALDKNPETRPSAAQLLEHPFVKKASGNKPLRDLVAEAKAEVLDEIEEQGEAEEEEDSDMLSPKTKGVSQSTHVEIGKDIEREQVGNGIKPHSATSPQKTDSQADNYSQRRNNEVKNCPENGRPDAVNGKPDIIILNPLSSNLEPKRNSTAESYRGEEHSSASSQRQRSAQSAELVPNGSFDSPTRYFTNWSKRDSDSGSNSASESMDISMNLSADLSMNKETGFLSHRENRLHKKTLKRTRRFVVDGVEVSITTSKIIGDDEKKDEEMRFLRRQELRELRLLQKEEHRHQAQLTSKHSFQLEQMSRRFEQEMNSKRKFYDTELETLERHQKQQIVWMEQEHAFRRRDEAKHIKTEQERDHIKFLEQLKLRKKELKAHVEKLPRQQRRETMKVQMDGFAHKKQTEEQQFVNRQKEDLNLAMRVIVLENRKEIYNKEREFLNKKQQLLRDRESVIWELEERHLQERHQLVKQQLKDQYFLQRHELLRKHEKEQEQMQRYNQRMMEQLRLRQQQEKVRLPKNQKAEAKTRMTMFKKSLHISPSGSAAEQRDKIKQFSLQEEKRQKAERLQQQQKHEHQLMEMLAECDCNVRDLLQMQNEKCHLLVEHETQKLKSLDEHHIQLIREWRENIRPRKKAFEDELELKKEAQEMFFRLNEEVAGDPFLSNKPTRFYSFSSPEAS.

In terms of domain architecture, Protein kinase spans 36 to 294 (WEIIGELGDG…AAQLLEHPFV (259 aa)). ATP contacts are provided by residues 42–50 (LGDGAFGKV) and Lys-65. Residue Asp-157 is the Proton acceptor of the active site. The span at 319 to 331 (EEQGEAEEEEDSD) shows a compositional bias: acidic residues. The segment at 319-478 (EEQGEAEEEE…DSGSNSASES (160 aa)) is disordered. Positions 347-356 (EIGKDIEREQ) are enriched in basic and acidic residues. Residues 365 to 382 (SATSPQKTDSQADNYSQR) show a composition bias toward polar residues. Residues 416–432 (EPKRNSTAESYRGEEHS) show a composition bias toward basic and acidic residues. A compositionally biased stretch (low complexity) spans 433–445 (SASSQRQRSAQSA). Residues 452-463 (SFDSPTRYFTNW) show a composition bias toward polar residues. Ser-482, Ser-486, and Ser-490 each carry phosphoserine; by PLK1. The stretch at 634-786 (IKFLEQLKLR…QLRLRQQQEK (153 aa)) forms a coiled coil.

This sequence belongs to the protein kinase superfamily. STE Ser/Thr protein kinase family. STE20 subfamily. As to quaternary structure, homodimer. In terms of processing, autophosphorylates. Phosphorylated by plk1/plx1, suggesting the existence of a feedback loop with plk1/plx1. activation of the protein.

The protein resides in the cell membrane. It carries out the reaction L-seryl-[protein] + ATP = O-phospho-L-seryl-[protein] + ADP + H(+). It catalyses the reaction L-threonyl-[protein] + ATP = O-phospho-L-threonyl-[protein] + ADP + H(+). May act as a polo kinase kinase by mediating phosphorylation of plk1/plx1 and subsequent activation of plk1/plx1 during oocyte maturation. This Xenopus laevis (African clawed frog) protein is Serine/threonine-protein kinase 10-A (stk10-a).